A 232-amino-acid chain; its full sequence is 7-cyano-7-deazaguanine synthase (232 aa).

Position 8–18 (Leu8–Leu18) interacts with ATP. Zn(2+)-binding residues include Cys188, Cys198, Cys201, and Cys204.

It belongs to the QueC family. Zn(2+) serves as cofactor.

It carries out the reaction 7-carboxy-7-deazaguanine + NH4(+) + ATP = 7-cyano-7-deazaguanine + ADP + phosphate + H2O + H(+). It functions in the pathway purine metabolism; 7-cyano-7-deazaguanine biosynthesis. Its function is as follows. Catalyzes the ATP-dependent conversion of 7-carboxy-7-deazaguanine (CDG) to 7-cyano-7-deazaguanine (preQ(0)). This is 7-cyano-7-deazaguanine synthase from Nitrosospira multiformis (strain ATCC 25196 / NCIMB 11849 / C 71).